A 308-amino-acid chain; its full sequence is Methionyl-tRNA formyltransferase (308 aa).

110-113 contacts (6S)-5,6,7,8-tetrahydrofolate; it reads SLLP.

The protein belongs to the Fmt family.

The enzyme catalyses L-methionyl-tRNA(fMet) + (6R)-10-formyltetrahydrofolate = N-formyl-L-methionyl-tRNA(fMet) + (6S)-5,6,7,8-tetrahydrofolate + H(+). Functionally, attaches a formyl group to the free amino group of methionyl-tRNA(fMet). The formyl group appears to play a dual role in the initiator identity of N-formylmethionyl-tRNA by promoting its recognition by IF2 and preventing the misappropriation of this tRNA by the elongation apparatus. The sequence is that of Methionyl-tRNA formyltransferase from Neisseria meningitidis serogroup C / serotype 2a (strain ATCC 700532 / DSM 15464 / FAM18).